The chain runs to 619 residues: 4-hydroxyphenylalkanoate adenylyltransferase (619 aa).

This sequence belongs to the ATP-dependent AMP-binding enzyme family.

The enzyme catalyses 17-(4-hydroxyphenyl)heptadecanoate + holo-[(phenol)carboxyphthiodiolenone synthase] + ATP = 17-(4-hydroxyphenyl)heptadecanoyl-[(phenol)carboxyphthiodiolenone synthase] + AMP + diphosphate. The catalysed reaction is 19-(4-hydroxyphenyl)nonadecanoate + holo-[(phenol)carboxyphthiodiolenone synthase] + ATP = 19-(4-hydroxyphenyl)nonadecanoyl-[(phenol)carboxyphthiodiolenone synthase] + AMP + diphosphate. It functions in the pathway lipid metabolism; fatty acid biosynthesis. In terms of biological role, catalyzes the activation of long-chain fatty acids as acyl-adenylates (acyl-AMP), which are then transferred to the multifunctional polyketide synthase PpsA for further chain extension. Involved in the biosynthesis of phenolphthiocerol, which is an important intermediate in the biosynthesis of phenolic glycolipid (PGL), also called mycosid B. The chain is 4-hydroxyphenylalkanoate adenylyltransferase (fadD29) from Mycobacterium bovis (strain ATCC BAA-935 / AF2122/97).